The sequence spans 40 residues: Ferredoxin-2 (40 aa).

The 38-residue stretch at 3 to 40 folds into the 2Fe-2S ferredoxin-type domain; it reads YNIKLITPEGTKEITCSDSEYILDAAEEKGLDLPYSCR. C39 contacts [2Fe-2S] cluster.

It belongs to the 2Fe2S plant-type ferredoxin family. It depends on [2Fe-2S] cluster as a cofactor.

It is found in the plastid. The protein resides in the chloroplast. In terms of biological role, ferredoxins are iron-sulfur proteins that transfer electrons in a wide variety of metabolic reactions. The sequence is that of Ferredoxin-2 from Pisum sativum (Garden pea).